We begin with the raw amino-acid sequence, 284 residues long: Circadian clock oscillator protein KaiA (284 aa).

The tract at residues 1–135 (MLSQIAICIW…LRLAPVETMA (135 aa)) is psR domain, binds oxidized quinones. The KaiA N-terminal domain occupies 1-164 (MLSQIAICIW…DLAQRLQERL (164 aa)). A flexible linker region spans residues 165 to 173 (GYLGVYYKR). Residues 174–282 (DPDRFLRNLP…CEMYRRSIPR (109 aa)) enclose the KaiA C-terminal domain.

This sequence belongs to the KaiA family. As to quaternary structure, homodimer. The KaiABC complex composition changes during the circadian cycle to control KaiC phosphorylation. Complexes KaiC(6), KaiA(2-4):KaiC(6), KaiB(6):KaiC(6) and KaiC(6):KaiB(6):KaiA(12) are among the most important forms, many form cooperatively. The KaiA:KaiB complex is only found at 20-24 hours in the circadian cycle (subjective night). Binds to the C-terminal A-loop of KaiC via a coiled-coil structure. KaiA and CikA compete for binding to KaiB(fs). CikA copurifies with this protein in the clock complex. Interacts with LdpA.

Binding of oxidized quinones (produced as darkness falls) prevents KaiA from stimulating KaiC autophosphorylation. Its function is as follows. Key component of the KaiABC oscillator complex, which constitutes the main circadian regulator in cyanobacteria. Complex composition changes during the circadian cycle to control KaiC phosphorylation. KaiA stimulates KaiC autophosphorylation, while KaiB sequesters KaiA, leading to KaiC autodephosphorylation. KaiA binding to the KaiC CII domain during the subjective day yields KaiA(2-4):KaiC(6) complexes which stimulate KaiC autophosphorylation. A KaiA dimer is sufficient to enhance KaiC hexamer phosphorylation. Phospho-Ser-431 KaiC accumulation triggers binding of KaiB during the subjective night to form the KaiB(6):KaiC(6) complex, leading to changes in the output regulators CikA and SasA. KaiB(6):KaiC(6) formation exposes a site for KaiA binding on KaiB that sequesters KaiA from KaiC's CII domain, making the KaiC(6):KaiB(6):KaiA(12) complex resulting in KaiC autodephosphorylation. Complete dephosphorylation of KaiC leads to dissociation of KaiA(2):KaiB(1), completing 1 cycle of the Kai oscillator. Functionally, circadian oscillations can be generated in vitro by incubating KaiA, KaiB and KaiC with 1 mM ATP. The cycle is self-sustainable for at least 3 cycles and resistant to temperature changes. A very robust clock is reconstituted with KaiA, KaiB, KaiC, SasA, CikA and RpaA; output is measured by transcription from an appropriate reporter. In terms of biological role, kaiA binds oxidized quinones via its N-terminal PsR domain and is able to sense redox signals directly; quinone analog DBMIB (2,5-dibromo-3-methyl-6-isopropyl-p-benzoquinone) blocks KaiA stimulation of KaiC phosphorylation. The homodimer binds up to 8 quinones in the crystal structure, 3 in the PsR domain and 1 via the C-terminal helical bundle. Binding of oxidized quinone to the KaiA C-terminal domain reduces the phosphorylation of KaiC slightly; quinones may interact in a complex manner with KaiA to mediate clock input. The polypeptide is Circadian clock oscillator protein KaiA (Synechococcus elongatus (strain ATCC 33912 / PCC 7942 / FACHB-805) (Anacystis nidulans R2)).